Reading from the N-terminus, the 325-residue chain is GMP reductase (325 aa).

The Thioimidate intermediate role is filled by C173. Position 202-225 (202-225) interacts with NADP(+); sequence IIADGGIRSHGDIAKSVRFGATMV.

It belongs to the IMPDH/GMPR family. GuaC type 2 subfamily.

It catalyses the reaction IMP + NH4(+) + NADP(+) = GMP + NADPH + 2 H(+). Its function is as follows. Catalyzes the irreversible NADPH-dependent deamination of GMP to IMP. It functions in the conversion of nucleobase, nucleoside and nucleotide derivatives of G to A nucleotides, and in maintaining the intracellular balance of A and G nucleotides. The chain is GMP reductase from Acidovorax ebreus (strain TPSY) (Diaphorobacter sp. (strain TPSY)).